We begin with the raw amino-acid sequence, 157 residues long: Transcriptional repressor NrdR (157 aa).

A disordered region spans residues 1–24; it reads MRCPKCGGNKSSVVDSRQAEDGNT. Residues 3–34 fold into a zinc finger; sequence CPKCGGNKSSVVDSRQAEDGNTIRRRRECEEC. The region spanning 49-139 is the ATP-cone domain; sequence LVVVKKDGTR…VYRSFKDVGE (91 aa).

This sequence belongs to the NrdR family. It depends on Zn(2+) as a cofactor.

Its function is as follows. Negatively regulates transcription of bacterial ribonucleotide reductase nrd genes and operons by binding to NrdR-boxes. The chain is Transcriptional repressor NrdR from Streptococcus sanguinis (strain SK36).